Reading from the N-terminus, the 404-residue chain is MKKIYDLWVRVSLIKKIGIGVVIGVMLGILAPDLTGFSILGKLFVGGLKAIAPLLVFALVSQAISHQKKGRQTNMTLIIVLYLFGTFASALVAVLTAYLFPLTLVLNTPVNTELSPPQGVAEVFQSLLLKLVDNPINALATANYIGVLSWAIIFGLALKAASQETKHLIKTAAEVTSQIVVWIINLAPIGIMSLVFTTISENGVGILSDYAFLILVLVGTMVFVALVVNPLIAVLITRQNPYPLVLRCLRESGLTAFFTRSSAANIPVNMQLCQKIGLSKDTYSVSIPLGATINMGGAAITINVLTLAAVHTFGIPIDFLTALLLSVVAAVSACGASGVAGGSLLLIPVACSLFGISNDLAMQVVGVGFIVGVIQDSCETALNSSTDVLFTAIAENAFWKRKKA.

Helical transmembrane passes span 17-37 (IGIG…LTGF), 39-59 (ILGK…VFAL), 75-95 (MTLI…VAVL), 138-158 (ALAT…GLAL), 179-199 (IVVW…FTTI), 212-232 (FLIL…NPLI), 287-307 (IPLG…VLTL), and 313-333 (FGIP…AVSA).

This sequence belongs to the dicarboxylate/amino acid:cation symporter (DAACS) (TC 2.A.23) family.

The protein localises to the cell membrane. The enzyme catalyses L-serine(in) + Na(+)(in) = L-serine(out) + Na(+)(out). The catalysed reaction is L-threonine(in) + Na(+)(in) = L-threonine(out) + Na(+)(out). Involved in the import of serine and threonine into the cell, with the concomitant import of sodium (symport system). The sequence is that of Serine/threonine transporter SstT from Streptococcus pyogenes serotype M2 (strain MGAS10270).